Here is a 1169-residue protein sequence, read N- to C-terminus: C5a peptidase (1169 aa).

The first 31 residues, 1-31 (MRKKQKLPFDKLAIALMSTSILLNAQSDIKA), serve as a signal peptide directing secretion. The tract at residues 33-111 (TVTEDTPATE…ETIRDLNDPS (79 aa)) is disordered. A compositionally biased stretch (polar residues) spans 48–67 (PQQTAVSEEAPSSSSKETNP). Residues 101–583 (KETIRDLNDP…AGAVDAKKAS (483 aa)) form the Peptidase S8 domain. A compositionally biased stretch (basic and acidic residues) spans 102–111 (ETIRDLNDPS). Residues D132, H195, and S514 each act as charge relay system in the active site. The interval 1028 to 1135 (NLLEGHSNKP…RDQLPTTNDK (108 aa)) is disordered. Composition is skewed to basic and acidic residues over residues 1033–1056 (HSNK…KPEQ), 1063–1073 (PDKKPEAKPEQ), and 1080–1092 (PDKK…EKDS). Tandem repeats lie at residues 1036-1052 (KPEQ…TPET), 1053-1069 (KPEQ…KPEA), 1070-1086 (KPEQ…KPET), and 1087-1103 (KPEK…TPQK). Residues 1036 to 1103 (KPEQDGSDQV…GQTPGKTPQK (68 aa)) are 4 X 17 AA tandem repeats. Positions 1093–1108 (SGQTPGKTPQKGQPSR) are enriched in polar residues. Residues 1129-1133 (LPTTN) carry the LPXTG sorting signal motif. At T1132 the chain carries Pentaglycyl murein peptidoglycan amidated threonine. Residues 1133-1169 (NDKDTNRLHLLKLVMTTFFFGLVAHIFKTKRQKETKK) constitute a propeptide, removed by sortase.

The protein belongs to the peptidase S8 family. Post-translationally, cleaved by SpeB protease; leading to its degradation. Degradation by SpeB is probably strictly regulated to preserve integrity of C5a peptidase.

It is found in the secreted. The protein localises to the cell wall. It carries out the reaction The primary cleavage site is at 67-His-|-Lys-68 in human C5a with a minor secondary cleavage site at 58-Ala-|-Ser-59.. Functionally, this virulence factor of S.pyogenes specifically cleaves the human serum chemotaxin C5a at '68-Lys-|-Asp-69' bond near its C-terminus, destroying its ability to serve as a chemoattractant. This chain is C5a peptidase (scpA), found in Streptococcus pyogenes serotype M3 (strain ATCC BAA-595 / MGAS315).